The primary structure comprises 252 residues: Hydroxyacylglutathione hydrolase (252 aa).

Positions 54, 56, 58, 59, 111, 128, and 166 each coordinate Zn(2+).

The protein belongs to the metallo-beta-lactamase superfamily. Glyoxalase II family. Monomer. Requires Zn(2+) as cofactor.

The enzyme catalyses an S-(2-hydroxyacyl)glutathione + H2O = a 2-hydroxy carboxylate + glutathione + H(+). The protein operates within secondary metabolite metabolism; methylglyoxal degradation; (R)-lactate from methylglyoxal: step 2/2. In terms of biological role, thiolesterase that catalyzes the hydrolysis of S-D-lactoyl-glutathione to form glutathione and D-lactic acid. The sequence is that of Hydroxyacylglutathione hydrolase from Aliivibrio salmonicida (strain LFI1238) (Vibrio salmonicida (strain LFI1238)).